A 305-amino-acid polypeptide reads, in one-letter code: Probable L-ribulose-5-phosphate 3-epimerase UlaE (305 aa).

Belongs to the L-ribulose-5-phosphate 3-epimerase family.

The catalysed reaction is L-ribulose 5-phosphate = L-xylulose 5-phosphate. Its pathway is cofactor degradation; L-ascorbate degradation; D-xylulose 5-phosphate from L-ascorbate: step 3/4. Catalyzes the isomerization of L-xylulose-5-phosphate to L-ribulose-5-phosphate. Is involved in the anaerobic L-ascorbate utilization. The chain is Probable L-ribulose-5-phosphate 3-epimerase UlaE (ulaE) from Mycoplasma pneumoniae (strain ATCC 29342 / M129 / Subtype 1) (Mycoplasmoides pneumoniae).